Consider the following 870-residue polypeptide: NEDD4-like E3 ubiquitin-protein ligase WWP2 (870 aa).

Positions 1 to 117 (MASASSSRAG…KNNGGKMENM (117 aa)) constitute a C2 domain. The segment at 151–299 (VPNGSALTDG…QQLPAAAQAP (149 aa)) is disordered. 2 stretches are compositionally biased toward polar residues: residues 152-171 (PNGSALTDGSQLPSRDSSGT) and 200-210 (SARTTPATGEQ). Ser211 is modified (phosphoserine). Composition is skewed to polar residues over residues 222–243 (VKNSGHSGLANGTVNDEPTTAT) and 263–272 (VTPNPNTTSL). Residues 290–299 (QQLPAAAQAP) are compositionally biased toward low complexity. 4 WW domains span residues 300–333 (DALPAGWEQRELPNGRVYYVDHNTKTTTWERPLP), 330–363 (RPLPPGWEKRTDPRGRFYYVDHNTRTTTWQRPTA), 405–437 (GPLPPGWEKRQDNGRVYYVNHNTRTTQWEDPRT), and 444–477 (PALPPGWEMKYTSEGVRYFVDHNTRTTTFKDPRP). The region spanning 536–870 (KPYDLRRRLY…IEETEGFGQE (335 aa)) is the HECT domain. Cys838 acts as the Glycyl thioester intermediate in catalysis.

As to quaternary structure, interacts with POU5F1, RBP1, EGR2 and SLC11A2. Interacts with SCNN1A, SCNN1B, SCNN1G, WBP1, WBP2 and ATN1. Interacts with ERBB4, NDFIP1 and NDFIP2. Interacts with ARRDC4. Interacts (via WW domains) with ARRDC1 (via PPxY motifs); ubiquitinates ARRDC1. Interacts (via WW domains) with ARRDC2 and ARRDC3. (Microbial infection) Interacts with adenovirus type 2 PIII. In terms of processing, autoubiquitinated. Ubiquitinated by the SCF(FBXL15) complex, leading to its degradation by the proteasome. As to expression, detected in heart, throughout the brain, placenta, lung, liver, muscle, kidney and pancreas. Also detected in spleen and peripheral blood leukocytes.

The protein resides in the nucleus. It carries out the reaction S-ubiquitinyl-[E2 ubiquitin-conjugating enzyme]-L-cysteine + [acceptor protein]-L-lysine = [E2 ubiquitin-conjugating enzyme]-L-cysteine + N(6)-ubiquitinyl-[acceptor protein]-L-lysine.. It functions in the pathway protein modification; protein ubiquitination. With respect to regulation, activated by NDFIP1- and NDFIP2-binding. Its function is as follows. E3 ubiquitin-protein ligase which accepts ubiquitin from an E2 ubiquitin-conjugating enzyme in the form of a thioester and then directly transfers the ubiquitin to targeted substrates. Polyubiquitinates POU5F1 by 'Lys-63'-linked conjugation and promotes it to proteasomal degradation; in embryonic stem cells (ESCs) the ubiquitination is proposed to regulate POU5F1 protein level. Ubiquitinates EGR2 and promotes it to proteasomal degradation; in T-cells the ubiquitination inhibits activation-induced cell death. Ubiquitinates SLC11A2; the ubiquitination is enhanced by presence of NDFIP1 and NDFIP2. Ubiquitinates RPB1 and promotes it to proteasomal degradation. The chain is NEDD4-like E3 ubiquitin-protein ligase WWP2 (WWP2) from Homo sapiens (Human).